A 97-amino-acid chain; its full sequence is uncharacterized protein (97 aa).

This is an uncharacterized protein from Archaeoglobus fulgidus (strain ATCC 49558 / DSM 4304 / JCM 9628 / NBRC 100126 / VC-16).